We begin with the raw amino-acid sequence, 154 residues long: Egg-lysin (154 aa).

Positions 1 to 18 (MKLLVLCIFAMMATLAMS) are cleaved as a signal peptide.

In terms of assembly, monomer. Homodimer. Molecules associate into dimers and then rapidly dissociate again. Interacts (as a monomer) with the egg vitelline layer protein VERL (via VERL repeats); each VERL chain can bind multiple copies of lysin. In terms of tissue distribution, sperm (at protein level).

It is found in the cytoplasmic vesicle. It localises to the secretory vesicle. The protein resides in the acrosome lumen. Creates a 3 um hole in the egg vitelline layer through which the sperm passes. Does not have enzyme activity. Species-specific interaction between the sperm protein lysin and the egg protein VERL exposes a basic surface on lysin that may dissociate the egg vitelline layer via electrostatic repulsion. Plays a role in ensuring species-specific fertilization. This is Egg-lysin from Haliotis rufescens (California red abalone).